Reading from the N-terminus, the 196-residue chain is Pantothenic acid transporter PanT (196 aa).

6 helical membrane passes run 10–30, 35–55, 58–78, 99–119, 131–151, and 161–181; these read AILAIFIAIMVVVQLFTQFVI, FPVKPTLLHLPVIIGSIILGW, GAFLGLVWGLISFVTATIVTT, WGLFIAFIPRILVGILPYFVY, AAFAGTATNTVLVLTSIFLFF, and YLLGAIVATNSLTEVIIAVIL.

In terms of assembly, in E.coli forms a stable energy-coupling factor (ECF) transporter complex composed of 2 membrane-embedded substrate-binding protein (S component), 2 ATP-binding proteins (A and A' components) and 2 transmembrane proteins (T component), probably with a stoichiometry of 2:1:1:2. May be able to interact with more than 1 S component at a time.

It localises to the cell membrane. Functionally, probably a pantothenic acid-binding protein that interacts with the energy-coupling factor (ECF) ABC-transporter complex. Unlike classic ABC transporters this ECF transporter provides the energy necessary to transport a number of different substrates. The substrates themselves are bound by transmembrane, not extracytoplasmic soluble proteins. The chain is Pantothenic acid transporter PanT (panT) from Lactococcus lactis subsp. cremoris (strain MG1363).